Here is a 317-residue protein sequence, read N- to C-terminus: Methionyl-tRNA formyltransferase (317 aa).

113 to 116 (SLLP) contacts (6S)-5,6,7,8-tetrahydrofolate.

Belongs to the Fmt family.

It carries out the reaction L-methionyl-tRNA(fMet) + (6R)-10-formyltetrahydrofolate = N-formyl-L-methionyl-tRNA(fMet) + (6S)-5,6,7,8-tetrahydrofolate + H(+). Its function is as follows. Attaches a formyl group to the free amino group of methionyl-tRNA(fMet). The formyl group appears to play a dual role in the initiator identity of N-formylmethionyl-tRNA by promoting its recognition by IF2 and preventing the misappropriation of this tRNA by the elongation apparatus. The protein is Methionyl-tRNA formyltransferase of Pseudomonas fluorescens (strain SBW25).